The primary structure comprises 131 residues: Arsenate reductase (131 aa).

Catalysis depends on nucleophile residues Cys10, Cys82, and Cys89. Disulfide bonds link Cys10/Cys82 and Cys82/Cys89.

It belongs to the low molecular weight phosphotyrosine protein phosphatase family. Thioredoxin-coupled ArsC subfamily.

Its subcellular location is the cytoplasm. It carries out the reaction arsenate + [thioredoxin]-dithiol + H(+) = arsenite + [thioredoxin]-disulfide + H2O. In terms of biological role, catalyzes the reduction of arsenate [As(V)] to arsenite [As(III)]. In Staphylococcus aureus (strain bovine RF122 / ET3-1), this protein is Arsenate reductase.